The chain runs to 132 residues: Small ribosomal subunit protein uS8 (132 aa).

This sequence belongs to the universal ribosomal protein uS8 family. Part of the 30S ribosomal subunit. Contacts proteins S5 and S12.

One of the primary rRNA binding proteins, it binds directly to 16S rRNA central domain where it helps coordinate assembly of the platform of the 30S subunit. This Geobacillus sp. (strain WCH70) protein is Small ribosomal subunit protein uS8.